Here is a 222-residue protein sequence, read N- to C-terminus: Histone H1.5 (222 aa).

Over residues 1 to 16 (MSETAPAETTAPAPVE) the composition is skewed to low complexity. The tract at residues 1-55 (MSETAPAETTAPAPVEKSPAKKKTKKAGAAKRKATGPPVSELITKAVSASKERGG) is disordered. The residue at position 2 (serine 2) is an N-acetylserine. The residue at position 2 (serine 2) is a Phosphoserine. Position 17 is an N6-acetyllysine (lysine 17). Phosphoserine is present on serine 18. A compositionally biased stretch (basic residues) spans 20-34 (AKKKTKKAGAAKRKA). An N6-methyllysine modification is found at lysine 26. Residue lysine 33 is modified to N6-(beta-hydroxybutyryl)lysine; alternate. At lysine 33 the chain carries N6-succinyllysine; alternate. At threonine 35 the chain carries Phosphothreonine. The H15 domain maps to 35 to 108 (TGPPVSELIT…GASGSFKLNK (74 aa)). N6-acetyllysine is present on lysine 45. Lysine 51 is modified (N6-(beta-hydroxybutyryl)lysine). Arginine 53 carries the post-translational modification Citrulline. An N6-(beta-hydroxybutyryl)lysine modification is found at lysine 63. The residue at position 74 (lysine 74) is an N6-acetyllysine. An N6-(beta-hydroxybutyryl)lysine mark is found at lysine 84, lysine 89, and lysine 105. The tract at residues 94–222 (QTKGTGASGS…KVKKAVSKKK (129 aa)) is disordered. A compositionally biased stretch (basic residues) spans 118 to 129 (KAKKTGAAKAKK). Threonine 134 and threonine 151 each carry phosphothreonine. A compositionally biased stretch (basic residues) spans 136–157 (KKPKKTAGAKKTVKKTPKKAKK). At lysine 164 the chain carries N6-acetyllysine. Residues 165 to 183 (KVTKSPKKAKAAAKPKKAT) are compositionally biased toward basic residues. 2 positions are modified to phosphoserine: serine 169 and serine 185. A compositionally biased stretch (basic residues) spans 190–222 (KAVKSKASKPKVTKPKAAKPKAAKVKKAVSKKK).

It belongs to the histone H1/H5 family. As to quaternary structure, interacts with MSX1. H1 histones are progressively phosphorylated during the cell cycle, becoming maximally phosphorylated during late G2 phase and M phase, and being dephosphorylated sharply thereafter. Post-translationally, citrullination at Arg-53 (H1R54ci) by PADI4 takes place within the DNA-binding site of H1 and results in its displacement from chromatin and global chromatin decondensation, thereby promoting pluripotency and stem cell maintenance.

The protein localises to the nucleus. It is found in the chromosome. In terms of biological role, histone H1 protein binds to linker DNA between nucleosomes forming the macromolecular structure known as the chromatin fiber. Histones H1 are necessary for the condensation of nucleosome chains into higher-order structured fibers. Also acts as a regulator of individual gene transcription through chromatin remodeling, nucleosome spacing and DNA methylation. The polypeptide is Histone H1.5 (H1-5) (Rattus norvegicus (Rat)).